The sequence spans 111 residues: uncharacterized protein (111 aa).

To A.fulgidus AF1864.

This is an uncharacterized protein from Aquifex aeolicus (strain VF5).